Here is a 408-residue protein sequence, read N- to C-terminus: Serine-rich antigen (408 aa).

2 consecutive repeat copies span residues 209 to 214 and 230 to 235. Residues 209 to 235 are 2 X 6 AA repeats of S-V-A-Q-S-E; it reads SVAQSEEHGSDSMSQSYNTCGSVAQSE.

Belongs to the mycobacterial PPE family.

The polypeptide is Serine-rich antigen (sra) (Mycobacterium leprae (strain TN)).